The sequence spans 321 residues: L-carnitine dehydrogenase (321 aa).

7 to 12 (GTGVIG) contributes to the NAD(+) binding site.

This sequence belongs to the 3-hydroxyacyl-CoA dehydrogenase family. L-carnitine dehydrogenase subfamily. In terms of assembly, homodimer.

It is found in the cytoplasm. The catalysed reaction is carnitine + NAD(+) = 3-dehydrocarnitine + NADH + H(+). It participates in amine and polyamine metabolism; carnitine metabolism. Functionally, catalyzes the NAD(+)-dependent oxidation of L-carnitine to 3-dehydrocarnitine. In Staphylococcus epidermidis (strain ATCC 12228 / FDA PCI 1200), this protein is L-carnitine dehydrogenase.